Consider the following 155-residue polypeptide: Ribonuclease 2B (155 aa).

The first 25 residues, 1 to 25 (MGLKLLESRLCLLLLLGLVLTLVSC), serve as a signal peptide directing secretion. H38 serves as the catalytic Proton acceptor. 4 cysteine pairs are disulfide-bonded: C47-C106, C61-C118, C79-C133, and C86-C94. 62 to 66 (KDLNT) serves as a coordination point for substrate. N-linked (GlcNAc...) asparagine glycosylation is present at N114. The Proton donor role is filled by H150.

It belongs to the pancreatic ribonuclease family.

The catalysed reaction is an [RNA] containing cytidine + H2O = an [RNA]-3'-cytidine-3'-phosphate + a 5'-hydroxy-ribonucleotide-3'-[RNA].. It catalyses the reaction an [RNA] containing uridine + H2O = an [RNA]-3'-uridine-3'-phosphate + a 5'-hydroxy-ribonucleotide-3'-[RNA].. This is a non-secretory ribonuclease. It is a pyrimidine specific nuclease with a slight preference for U. Cytotoxin and helminthotoxin. Possesses a wide variety of biological activities. The protein is Ribonuclease 2B of Mus musculus (Mouse).